The sequence spans 861 residues: E3 ubiquitin-protein ligase HECTD3 (861 aa).

Ala2 carries the N-acetylalanine modification. Position 12 is a phosphoserine (Ser12). The region spanning Asp219–Glu397 is the DOC domain. In terms of domain architecture, HECT spans Tyr512 to Ser857. The active-site Glycyl thioester intermediate is the Cys823.

In terms of assembly, interacts with TRIOBP. Interacts with STX8.

It localises to the cytoplasm. Its subcellular location is the perinuclear region. The catalysed reaction is S-ubiquitinyl-[E2 ubiquitin-conjugating enzyme]-L-cysteine + [acceptor protein]-L-lysine = [E2 ubiquitin-conjugating enzyme]-L-cysteine + N(6)-ubiquitinyl-[acceptor protein]-L-lysine.. Its pathway is protein modification; protein ubiquitination. E3 ubiquitin ligases accepts ubiquitin from an E2 ubiquitin-conjugating enzyme in the form of a thioester and then directly transfers the ubiquitin to targeted substrates. Mediates ubiquitination of TRIOBP and its subsequent proteasomal degradation, thus facilitating cell cycle progression by regulating the turn-over of TRIOBP. Also mediates ubiquitination of STX8. This chain is E3 ubiquitin-protein ligase HECTD3 (Hectd3), found in Mus musculus (Mouse).